The sequence spans 617 residues: pH-sensitive chloride channel 2 (617 aa).

Positions 1-28 (MHSPGAAAYVFLQCLVALVAAVIAQSGA) are cleaved as a signal peptide. The Extracellular segment spans residues 29 to 387 (DQPPTTVVEV…VHLAREMGFY (359 aa)). N-linked (GlcNAc...) asparagine glycosylation occurs at asparagine 57. Residues 82–96 (TVSVDSSSTTTVAST) show a composition bias toward low complexity. A disordered region spans residues 82–110 (TVSVDSSSTTTVASTQEPTSTTERTMSPE). Residues 97–106 (QEPTSTTERT) show a composition bias toward polar residues. The N-linked (GlcNAc...) asparagine glycan is linked to asparagine 130. A compositionally biased stretch (basic and acidic residues) spans 131-147 (ATDDNRPDAKSSGKDSE). Positions 131-155 (ATDDNRPDAKSSGKDSECPTLEGAD) are disordered. Residues asparagine 184, asparagine 234, asparagine 351, and asparagine 370 are each glycosylated (N-linked (GlcNAc...) asparagine). The helical transmembrane segment at 388–408 (MMDYFIPSIMLVAISWVTFWL) threads the bilayer. At 409 to 414 (QADQSA) the chain is on the cytoplasmic side. The helical transmembrane segment at 415 to 434 (PRITLGTSTMLTFITLASAQ) threads the bilayer. Over 435–447 (GKTLPKVSYIKAS) the chain is Extracellular. A helical membrane pass occupies residues 448 to 468 (EIWFLGCTGFIFGSLVEFAFV). Over 469-596 (NTIWRRKRNV…VAIWIDKRSR (128 aa)) the chain is Cytoplasmic. Residues 597–617 (FVFPIAFVIFNIFYWTFVYYV) traverse the membrane as a helical segment.

It belongs to the ligand-gated ion channel (TC 1.A.9) family.

The protein localises to the cell membrane. It catalyses the reaction chloride(in) = chloride(out). Ligand and pH-gated channel that mediates chloride transport in the mid-gut and thereby may function in larval metabolism and fluid homeostasis. Channel opening is triggered by zinc binding or, to a lesser extent, an increase in extracellular pH. This chain is pH-sensitive chloride channel 2, found in Anopheles gambiae (African malaria mosquito).